The sequence spans 378 residues: Ribosomal RNA large subunit methyltransferase G (378 aa).

Belongs to the methyltransferase superfamily. RlmG family.

The protein localises to the cytoplasm. It carries out the reaction guanosine(1835) in 23S rRNA + S-adenosyl-L-methionine = N(2)-methylguanosine(1835) in 23S rRNA + S-adenosyl-L-homocysteine + H(+). In terms of biological role, specifically methylates the guanine in position 1835 (m2G1835) of 23S rRNA. This chain is Ribosomal RNA large subunit methyltransferase G, found in Shigella boydii serotype 18 (strain CDC 3083-94 / BS512).